Here is a 298-residue protein sequence, read N- to C-terminus: RNA exonuclease 4 (298 aa).

Residues 1 to 73 (MRKTVRKNKQ…EAKLKLKSAT (73 aa)) adopt a coiled-coil conformation. The Exonuclease domain occupies 125–275 (FFSIDCKIIE…RDTIINVILY (151 aa)).

This sequence belongs to the REXO4 family.

The protein localises to the nucleus. This chain is RNA exonuclease 4 (rexo4), found in Dictyostelium discoideum (Social amoeba).